The sequence spans 421 residues: Glucose-1-phosphate adenylyltransferase (421 aa).

Residues tyrosine 109, glycine 175, 190-191 (EK), and serine 208 each bind alpha-D-glucose 1-phosphate.

It belongs to the bacterial/plant glucose-1-phosphate adenylyltransferase family. Homotetramer.

The catalysed reaction is alpha-D-glucose 1-phosphate + ATP + H(+) = ADP-alpha-D-glucose + diphosphate. It functions in the pathway glycan biosynthesis; glycogen biosynthesis. Functionally, involved in the biosynthesis of ADP-glucose, a building block required for the elongation reactions to produce glycogen. Catalyzes the reaction between ATP and alpha-D-glucose 1-phosphate (G1P) to produce pyrophosphate and ADP-Glc. The polypeptide is Glucose-1-phosphate adenylyltransferase (Teredinibacter turnerae (strain ATCC 39867 / T7901)).